The sequence spans 208 residues: Redox-sensing transcriptional repressor Rex (208 aa).

The segment at residues 15 to 54 (SYYMCLERLLDEGVEVVSSEELARRLDLKASQIRKDLSYF) is a DNA-binding region (H-T-H motif). 89 to 94 (GAGNIG) is an NAD(+) binding site.

This sequence belongs to the transcriptional regulatory Rex family. As to quaternary structure, homodimer.

It localises to the cytoplasm. Its function is as follows. Modulates transcription in response to changes in cellular NADH/NAD(+) redox state. This chain is Redox-sensing transcriptional repressor Rex, found in Thermotoga petrophila (strain ATCC BAA-488 / DSM 13995 / JCM 10881 / RKU-1).